The chain runs to 222 residues: Pleckstrin homology domain-containing family B member 2 (222 aa).

The region spanning 2-109 (AFVKSGWLLR…WKFTLQDSRT (108 aa)) is the PH domain. A 1,2-diacyl-sn-glycero-3-phospho-L-serine is bound at residue lysine 20.

The protein localises to the recycling endosome membrane. Involved in retrograde transport of recycling endosomes. The sequence is that of Pleckstrin homology domain-containing family B member 2 (PLEKHB2) from Homo sapiens (Human).